A 205-amino-acid chain; its full sequence is Phosphoribosyl-dephospho-CoA transferase (205 aa).

Active-site residues include Asp134 and Asp136.

This sequence belongs to the MdcG family.

The enzyme catalyses apo-[malonate decarboxylase ACP] + 2'-(5''-triphospho-alpha-D-ribosyl)-3'-dephospho-CoA = holo-[malonate decarboxylase ACP] + diphosphate. Transfers 2'-(5-triphosphoribosyl)-3'-dephosphocoenzyme-A to the apo-[acyl-carrier-protein] of the malonate decarboxylase to yield holo-[acyl-carrier-protein]. This is Phosphoribosyl-dephospho-CoA transferase from Klebsiella pneumoniae (strain 342).